We begin with the raw amino-acid sequence, 1194 residues long: ATP-dependent RNA helicase DHX30 (1194 aa).

Residues 1-10 (MFSLDSFRKD) show a composition bias toward basic and acidic residues. A disordered region spans residues 1 to 27 (MFSLDSFRKDRAQHRQRQCKLPPPRLP). S6 is modified (phosphoserine). The DRBM domain maps to 53 to 121 (PKNLLNSVIG…QAAAAACQLF (69 aa)). Residues 150-199 (ADSWWRPEPTMPPTSWRQLNPESIRPGGPGGLSRSLGREEEEDEEEELEE) are disordered. The span at 188-199 (EEEEDEEEELEE) shows a compositional bias: acidic residues. S226 and S380 each carry phosphoserine. Residues 444–612 (LNAIEQHPVV…FGGCPVIKVP (169 aa)) enclose the Helicase ATP-binding domain. 457-464 (GDTGCGKT) contacts ATP. The DEAH box signature appears at 559–562 (DEVH). Positions 654–827 (LVTDLVLHID…NLVLQAKIHM (174 aa)) constitute a Helicase C-terminal domain.

This sequence belongs to the DEAD box helicase family. DEAH subfamily. As to quaternary structure, identified in a complex with TFAM and SSBP1. Interacts (via N-terminus) with ZC3HAV1 (via N-terminal domain) in an RNA-independent manner. Found in a complex with GRSF1, DDX28, FASTKD2 and FASTKD5.

It is found in the cytoplasm. It localises to the mitochondrion. Its subcellular location is the mitochondrion matrix. The protein resides in the mitochondrion nucleoid. It carries out the reaction ATP + H2O = ADP + phosphate + H(+). Its function is as follows. RNA-dependent helicase. Plays an important role in the assembly of the mitochondrial large ribosomal subunit. Required for optimal function of the zinc-finger antiviral protein ZC3HAV1. Associates with mitochondrial DNA. Involved in nervous system development and differentiation through its involvement in the up-regulation of a number of genes which are required for neurogenesis, including GSC, NCAM1, neurogenin, and NEUROD. This Pongo abelii (Sumatran orangutan) protein is ATP-dependent RNA helicase DHX30 (DHX30).